A 921-amino-acid chain; its full sequence is MEGHGPQKSSPLARDLTRAFNGYHKQTVLLKKNLKETHAFFREMRQNYSNTCASSTLSSDSASLETSQFSCISFPSHEEEFLRNTVGAAPYILVLGQDCAARYQLLNCLLGERLLPLGPQAGHACHGGQGSTCKRRKLCFTHGKQTRLSLALPGQYELVHQLVANCGRWDTVPREDLEILDECEDPAHRQAELEITLHHPMLQEAKVMVVPCPSVQPIEEAIEDCTRSAIPIVLYAVNQDSLSSEQVADLWKVKEILSFPICFVRLPNLSEDSSEPGQRFEKDKSKLQKQLLSHGLLTCPMGNCSCGAPTQMPTPGAKPQSVLGENFERLHRILVPFTRQVLQNQQVEAASLLNGLHCRCLDLFINQAFDMQRDLQITPRRLEYTREKEGELFTSLMAIANRKQEEMKDMIVETLGSMKEQLLEDAANLEFTDIIVTTNGDPVTSKEIKSCIHQIQDLIVVRLNQAVANKLISSVDYLRESFVGTLERCLDSLEKSHIESSVHNITSNHLKQLLNAAYHVEVTFHSGSSVTRLFWEQIKQIIHRITFVNPPAITPEWKRKVAQDAIESLSAAKLARSICSQFRTRLNSSHEAFAASLRQLEERHTGRLERTEDLWLRVRKDHAPRLARLSLESRSLRDVLLHGKPKLGRELGRGQYGVVYLCDNWGGHYPCALKSVVPPDDKHWNDLALEFHYTRTLPKHERLVDLHGSVIDHTYAGGSSIAVLLIMERLHRDLYTGLKAGLSLQERLQIALDVVEGIRFLHNQGLLHRDIKLKNVLLDKQNRAKITDLGFCKPEAMMSGSIVGTPIHMAPELFTGKYDNSVDVYAFGILFWYLCAGSVKLPEAFEKCSSKDQLWNNVKKGARPERLPCFDEECWQLMEACWNGDPSQRPLLGIVEPSLQSMMVRLCCGSEQKSSSLEDSS.

In terms of domain architecture, Protein kinase spans 645–899 (PKLGRELGRG…PLLGIVEPSL (255 aa)). Residues 651-659 (LGRGQYGVV) and Lys674 each bind ATP. Asp770 serves as the catalytic Proton acceptor.

The protein belongs to the protein kinase superfamily. Ser/Thr protein kinase family.

The protein localises to the cytoplasm. The protein resides in the cell membrane. It is found in the apical cell membrane. Its subcellular location is the basolateral cell membrane. It localises to the cell junction. It carries out the reaction L-seryl-[protein] + ATP = O-phospho-L-seryl-[protein] + ADP + H(+). The catalysed reaction is L-threonyl-[protein] + ATP = O-phospho-L-threonyl-[protein] + ADP + H(+). The enzyme catalyses L-tyrosyl-[protein] + ATP = O-phospho-L-tyrosyl-[protein] + ADP + H(+). May act as a positive regulator of ERK phosphorylation downstream of fibroblast growth factor-receptor activation. May induce both caspase-dependent apoptosis and caspase-independent cell death. May play a role in the embryonic development. This chain is Dual serine/threonine and tyrosine protein kinase (dstyk), found in Takifugu rubripes (Japanese pufferfish).